The following is a 123-amino-acid chain: MFSCLLHSSRPTDSYCTLAAPLSQTARTRTMTFHAATAKRKTEHSGIKESNLHLSRVLLSSFCRAKGRFVSFFICYPFPFGLTRFPRVLWSIGLDKSLFTRVHFSPSFFSLLAPLQFSGIVRS.

This is an uncharacterized protein from Saccharomyces cerevisiae (strain ATCC 204508 / S288c) (Baker's yeast).